The following is a 287-amino-acid chain: Urease accessory protein UreD (287 aa).

The protein belongs to the UreD family. In terms of assembly, ureD, UreF and UreG form a complex that acts as a GTP-hydrolysis-dependent molecular chaperone, activating the urease apoprotein by helping to assemble the nickel containing metallocenter of UreC. The UreE protein probably delivers the nickel.

It is found in the cytoplasm. In terms of biological role, required for maturation of urease via the functional incorporation of the urease nickel metallocenter. This Ureaplasma parvum serovar 3 (strain ATCC 27815 / 27 / NCTC 11736) protein is Urease accessory protein UreD.